The sequence spans 302 residues: GATA transcription factor 28 (302 aa).

The disordered stretch occupies residues 47–66 (NAGGMSEGVETDIPSHPGNV). The region spanning 77-112 (GSEQGDQLTLSFQGQVYVFDSVLPEKVQAVLLLLGG) is the Tify domain. A disordered region spans residues 119-141 (APPGLGSPHQNNRVSSLPGTPQR). Polar residues predominate over residues 126-141 (PHQNNRVSSLPGTPQR). Residues 147–189 (RLASLVRFREKRKGRNFDKKIRYTVRKEVALRMQRNKGQFTSA) enclose the CCT domain. The GATA-type zinc finger occupies 217–273 (QHQEISCRHCGIGEKSTPMMRRGPAGPRTLCNACGLMWANKGAFRDLSKASPQTAQN).

The protein belongs to the type IV zinc-finger family. Class C subfamily. In terms of tissue distribution, predominantly expressed in shoot apices, inflorescences and roots.

The protein resides in the nucleus. In terms of biological role, transcriptional activator that specifically binds 5'-GATA-3' or 5'-GAT-3' motifs within gene promoters. This Arabidopsis thaliana (Mouse-ear cress) protein is GATA transcription factor 28 (GATA28).